The chain runs to 349 residues: Phosphoribosylformylglycinamidine cyclo-ligase (349 aa).

Belongs to the AIR synthase family.

Its subcellular location is the cytoplasm. It catalyses the reaction 2-formamido-N(1)-(5-O-phospho-beta-D-ribosyl)acetamidine + ATP = 5-amino-1-(5-phospho-beta-D-ribosyl)imidazole + ADP + phosphate + H(+). It functions in the pathway purine metabolism; IMP biosynthesis via de novo pathway; 5-amino-1-(5-phospho-D-ribosyl)imidazole from N(2)-formyl-N(1)-(5-phospho-D-ribosyl)glycinamide: step 2/2. The protein is Phosphoribosylformylglycinamidine cyclo-ligase of Albidiferax ferrireducens (strain ATCC BAA-621 / DSM 15236 / T118) (Rhodoferax ferrireducens).